A 347-amino-acid polypeptide reads, in one-letter code: MDKENSKQTAQPPVVDPARLKQLNLAIETLEKQFGKGSIMRLGDDSAVMHVKAISTGSMALDYALGVGGFPRGRVTEIYGPESSGKTTLALHAIAEAQKEGGIAALVDAEHAFDPTYARKLGVDINSLLVSQPESGEQALSIVETLVRSGAVDIVVVDSVAALVPQAELEGEMGDSVVGLQARLMSQALRKLTGAISKSSSVCIFINQLRDKIGVMYGSPETTTGGKALKFYSSVRLDIRRIAQIKDGEEVVGNRTKVKVVKNKVAPPFKIAEFDILYGEGISVLGELIDLAVEFGIIKKAGAWFSYGSEKLGQGRENVKRLLKEDETVRNTIRQQVRDTLTGTPTE.

80–87 lines the ATP pocket; sequence GPESSGKT.

The protein belongs to the RecA family.

It is found in the cytoplasm. Functionally, can catalyze the hydrolysis of ATP in the presence of single-stranded DNA, the ATP-dependent uptake of single-stranded DNA by duplex DNA, and the ATP-dependent hybridization of homologous single-stranded DNAs. It interacts with LexA causing its activation and leading to its autocatalytic cleavage. The polypeptide is Protein RecA (Chlorobaculum parvum (strain DSM 263 / NCIMB 8327) (Chlorobium vibrioforme subsp. thiosulfatophilum)).